The chain runs to 174 residues: Co-chaperone protein HscB homolog (174 aa).

A J domain is found at 2 to 74 (NYFELFKFPP…IRRAEHMLSL (73 aa)).

Belongs to the HscB family. In terms of assembly, interacts with HscA and stimulates its ATPase activity.

Functionally, co-chaperone involved in the maturation of iron-sulfur cluster-containing proteins. Seems to help targeting proteins to be folded toward HscA. The polypeptide is Co-chaperone protein HscB homolog (Shewanella baltica (strain OS195)).